A 493-amino-acid polypeptide reads, in one-letter code: Occludin (493 aa).

The Cytoplasmic portion of the chain corresponds to 1 to 47 (MYSRPSNYAPSKDVYGGEMRSQPAYSYYPEEEIQHFYRWSSPPGIIK). Positions 41-250 (SPPGIIKIMS…IIFFAVKTRK (210 aa)) constitute an MARVEL domain. The chain crosses the membrane as a helical span at residues 48–70 (IMSILIVVMCVGIFACVASTLPW). Topologically, residues 71-116 (DLDITGQSMGYGMGSGSYSGGYTGYGFGGSQMGLGFAYGGNYTDPR) are extracellular. Residues 117-141 (AAKGFILAMAAFCFIIGLVIFVMLV) traverse the membrane as a helical segment. At 142 to 151 (TRTPLSTSRK) the chain is on the cytoplasmic side. Residues 152–176 (FYLIVIIVSAIIGGLVFIATIVYTV) form a helical membrane-spanning segment. Topologically, residues 177–224 (GVNPVAQASGSAFYTQIVSICNQFYSPVQTGVFVNQYLYHYCVVEPQE) are extracellular. A disulfide bond links C197 and C218. Residues 225-246 (AIAIVLGFLIVVAFAIIIFFAV) form a helical membrane-spanning segment. Over 247 to 493 (KTRKKINQYG…IKQMVSNYDK (247 aa)) the chain is Cytoplasmic. The segment at 334–407 (YGMSPRHYSS…TKQRQEYKQE (74 aa)) is disordered. Residues 352–361 (APPKKRPGKP) are compositionally biased toward basic residues. Residue T375 is modified to Phosphothreonine; by CK2; in vitro. The residue at position 379 (S379) is a Phosphoserine; by CK2; in vitro. The span at 379–389 (SADELEDDSWD) shows a compositional bias: acidic residues. Residues 386–493 (DSWDSEYPPI…IKQMVSNYDK (108 aa)) enclose the OCEL domain. A coiled-coil region spans residues 396–428 (TQTKQRQEYKQEFASDLHEYKRLQAELDELSKI).

It belongs to the ELL/occludin family. In terms of assembly, interacts in vitro with cingulin, possibly directly. Interacts with ZO-1. Post-translationally, phosphorylated. In terms of tissue distribution, localized at tight junctions of both epithelial and endothelial cells.

Its subcellular location is the cell membrane. It localises to the cell junction. The protein localises to the tight junction. Functionally, probably plays a role in the formation and regulation of the tight junction (TJ) paracellular permeability barrier. This chain is Occludin (ocln), found in Xenopus laevis (African clawed frog).